Consider the following 847-residue polypeptide: Alanine--tRNA ligase (847 aa).

Zn(2+) is bound by residues histidine 554, histidine 558, cysteine 656, and histidine 660.

The protein belongs to the class-II aminoacyl-tRNA synthetase family. Zn(2+) is required as a cofactor.

It is found in the cytoplasm. The enzyme catalyses tRNA(Ala) + L-alanine + ATP = L-alanyl-tRNA(Ala) + AMP + diphosphate. Functionally, catalyzes the attachment of alanine to tRNA(Ala) in a two-step reaction: alanine is first activated by ATP to form Ala-AMP and then transferred to the acceptor end of tRNA(Ala). Also edits incorrectly charged Ser-tRNA(Ala) and Gly-tRNA(Ala) via its editing domain. This Helicobacter pylori (strain J99 / ATCC 700824) (Campylobacter pylori J99) protein is Alanine--tRNA ligase.